The sequence spans 277 residues: 2-dehydro-3-deoxyphosphooctonate aldolase (277 aa).

Belongs to the KdsA family.

It is found in the cytoplasm. It catalyses the reaction D-arabinose 5-phosphate + phosphoenolpyruvate + H2O = 3-deoxy-alpha-D-manno-2-octulosonate-8-phosphate + phosphate. It functions in the pathway carbohydrate biosynthesis; 3-deoxy-D-manno-octulosonate biosynthesis; 3-deoxy-D-manno-octulosonate from D-ribulose 5-phosphate: step 2/3. The protein operates within bacterial outer membrane biogenesis; lipopolysaccharide biosynthesis. The sequence is that of 2-dehydro-3-deoxyphosphooctonate aldolase (kdsA) from Mesorhizobium japonicum (strain LMG 29417 / CECT 9101 / MAFF 303099) (Mesorhizobium loti (strain MAFF 303099)).